We begin with the raw amino-acid sequence, 756 residues long: 3-O-alpha-D-glucosyl-L-rhamnose phosphorylase (756 aa).

358 to 359 contributes to the substrate binding site; that stretch reads WD. The active-site Proton donor is the Glu486. Position 590–591 (590–591) interacts with substrate; sequence KQ.

This sequence belongs to the glycosyl hydrolase 65 family. Monomer.

It localises to the cytoplasm. The catalysed reaction is 3-O-alpha-D-glucosyl-L-rhamnose + phosphate = beta-D-glucose 1-phosphate + L-rhamnopyranose. Phosphorylase showing strict alpha-1,3-regioselectivity and producing 3-O-alpha-D-glucopyranosyl-L-rhamnopyranose. Specific for L-rhamnose as acceptor and beta-D-glucose 1-phosphate as donor. Does not phosphorylate alpha,alpha-trehalose, kojibiose, nigerose, or maltose. The sequence is that of 3-O-alpha-D-glucosyl-L-rhamnose phosphorylase from Lachnoclostridium phytofermentans (strain ATCC 700394 / DSM 18823 / ISDg) (Clostridium phytofermentans).